A 314-amino-acid chain; its full sequence is 4-hydroxy-3-methylbut-2-enyl diphosphate reductase (314 aa).

Residue C12 participates in [4Fe-4S] cluster binding. (2E)-4-hydroxy-3-methylbut-2-enyl diphosphate is bound by residues H43 and H81. 2 residues coordinate dimethylallyl diphosphate: H43 and H81. Isopentenyl diphosphate contacts are provided by H43 and H81. C103 contributes to the [4Fe-4S] cluster binding site. (2E)-4-hydroxy-3-methylbut-2-enyl diphosphate is bound at residue H131. Dimethylallyl diphosphate is bound at residue H131. An isopentenyl diphosphate-binding site is contributed by H131. The active-site Proton donor is the E133. Position 170 (T170) interacts with (2E)-4-hydroxy-3-methylbut-2-enyl diphosphate. C198 is a [4Fe-4S] cluster binding site. The (2E)-4-hydroxy-3-methylbut-2-enyl diphosphate site is built by S226, N228, and S271. Dimethylallyl diphosphate is bound by residues S226, N228, and S271. Positions 226, 228, and 271 each coordinate isopentenyl diphosphate.

Belongs to the IspH family. [4Fe-4S] cluster serves as cofactor.

The enzyme catalyses isopentenyl diphosphate + 2 oxidized [2Fe-2S]-[ferredoxin] + H2O = (2E)-4-hydroxy-3-methylbut-2-enyl diphosphate + 2 reduced [2Fe-2S]-[ferredoxin] + 2 H(+). It carries out the reaction dimethylallyl diphosphate + 2 oxidized [2Fe-2S]-[ferredoxin] + H2O = (2E)-4-hydroxy-3-methylbut-2-enyl diphosphate + 2 reduced [2Fe-2S]-[ferredoxin] + 2 H(+). It participates in isoprenoid biosynthesis; dimethylallyl diphosphate biosynthesis; dimethylallyl diphosphate from (2E)-4-hydroxy-3-methylbutenyl diphosphate: step 1/1. It functions in the pathway isoprenoid biosynthesis; isopentenyl diphosphate biosynthesis via DXP pathway; isopentenyl diphosphate from 1-deoxy-D-xylulose 5-phosphate: step 6/6. Its function is as follows. Catalyzes the conversion of 1-hydroxy-2-methyl-2-(E)-butenyl 4-diphosphate (HMBPP) into a mixture of isopentenyl diphosphate (IPP) and dimethylallyl diphosphate (DMAPP). Acts in the terminal step of the DOXP/MEP pathway for isoprenoid precursor biosynthesis. In Halalkalibacterium halodurans (strain ATCC BAA-125 / DSM 18197 / FERM 7344 / JCM 9153 / C-125) (Bacillus halodurans), this protein is 4-hydroxy-3-methylbut-2-enyl diphosphate reductase.